We begin with the raw amino-acid sequence, 70 residues long: Sporulation protein YhaL (70 aa).

A helical transmembrane segment spans residues 3–23 (FFPWWVYLCIVGIIFSAYKLV). Residues 48–70 (MEKERERRSSQQHEEENQNHSIA) are disordered.

It is found in the cell membrane. Functionally, required for efficient sporulation. The sequence is that of Sporulation protein YhaL (yhaL) from Bacillus subtilis (strain 168).